We begin with the raw amino-acid sequence, 438 residues long: GTPase Der (438 aa).

EngA-type G domains lie at 4-168 (PVVA…DDNS) and 177-352 (TKVC…NNYS). GTP is bound by residues 10–17 (GRANVGKS), 57–61 (DTGGL), 120–123 (NKID), 183–190 (GKPNVGKS), 230–234 (DTAGL), and 295–298 (NKWD). The region spanning 353–437 (MRISTGVLND…PLQFEFKTRG (85 aa)) is the KH-like domain.

The protein belongs to the TRAFAC class TrmE-Era-EngA-EngB-Septin-like GTPase superfamily. EngA (Der) GTPase family. As to quaternary structure, associates with the 50S ribosomal subunit.

GTPase that plays an essential role in the late steps of ribosome biogenesis. This is GTPase Der from Finegoldia magna (strain ATCC 29328 / DSM 20472 / WAL 2508) (Peptostreptococcus magnus).